The following is a 307-amino-acid chain: Methionyl-tRNA formyltransferase (307 aa).

108-111 (SLLP) provides a ligand contact to (6S)-5,6,7,8-tetrahydrofolate.

Belongs to the Fmt family.

It carries out the reaction L-methionyl-tRNA(fMet) + (6R)-10-formyltetrahydrofolate = N-formyl-L-methionyl-tRNA(fMet) + (6S)-5,6,7,8-tetrahydrofolate + H(+). Attaches a formyl group to the free amino group of methionyl-tRNA(fMet). The formyl group appears to play a dual role in the initiator identity of N-formylmethionyl-tRNA by promoting its recognition by IF2 and preventing the misappropriation of this tRNA by the elongation apparatus. This chain is Methionyl-tRNA formyltransferase, found in Xanthomonas campestris pv. campestris (strain 8004).